The sequence spans 104 residues: MAAKIRKGDKVIVLTGRDKGRTGEVFEVRPDAGTALVRGINLVKRHQKQTQNQEGGIITKEAPIHLSNVAYVGKDGKPTRIGFKVQADGKKVRVAKSSGVEIDG.

It belongs to the universal ribosomal protein uL24 family. As to quaternary structure, part of the 50S ribosomal subunit.

Functionally, one of two assembly initiator proteins, it binds directly to the 5'-end of the 23S rRNA, where it nucleates assembly of the 50S subunit. One of the proteins that surrounds the polypeptide exit tunnel on the outside of the subunit. The chain is Large ribosomal subunit protein uL24 from Bradyrhizobium sp. (strain BTAi1 / ATCC BAA-1182).